Reading from the N-terminus, the 229-residue chain is Cytidylate kinase (229 aa).

12 to 20 is a binding site for ATP; that stretch reads GPSGSGKGT.

It belongs to the cytidylate kinase family. Type 1 subfamily.

It is found in the cytoplasm. It catalyses the reaction CMP + ATP = CDP + ADP. It carries out the reaction dCMP + ATP = dCDP + ADP. The polypeptide is Cytidylate kinase (Pseudomonas fluorescens (strain ATCC BAA-477 / NRRL B-23932 / Pf-5)).